The sequence spans 212 residues: Prolactin (212 aa).

The N-terminal stretch at 1-24 (MAQRKTNGSKLFMMVLYMVAACSA) is a signal peptide. 2 cysteine pairs are disulfide-bonded: C70–C185 and C202–C212.

The protein belongs to the somatotropin/prolactin family. Pituitary gland.

It is found in the secreted. The chain is Prolactin (prl) from Dicentrarchus labrax (European seabass).